The primary structure comprises 708 residues: RNA-directed RNA polymerase catalytic subunit (708 aa).

A RdRp catalytic domain is found at 281–467; it reads RIKEIGMKNQ…GLNVSQKKSF (187 aa).

In terms of assembly, the RNA polymerase is composed of three subunits: PB1, PB2 and PA.

The enzyme catalyses RNA(n) + a ribonucleoside 5'-triphosphate = RNA(n+1) + diphosphate. Its function is as follows. RNA-dependent RNA polymerase which is responsible for replication and transcription of virus segments. Binds the promoter sequence of the encapsidated viral RNA. Displays an endonuclease activity involved in cap-stealing. Cleaves cellular pre-mRNA to generate primers for viral transcription. This Infectious salmon anemia virus (isolate Atlantic salmon/Norway/810/9/99) (ISAV) protein is RNA-directed RNA polymerase catalytic subunit.